Reading from the N-terminus, the 312-residue chain is DNA-directed RNA polymerase subunit alpha (312 aa).

The segment at 1–226 is alpha N-terminal domain (alpha-NTD); that stretch reads MIEFEKPNIT…EHLDIFVNLT (226 aa). The segment at 243–312 is alpha C-terminal domain (alpha-CTD); that stretch reads KEKMLEMTIE…DLGLGLRKED (70 aa).

Belongs to the RNA polymerase alpha chain family. As to quaternary structure, homodimer. The RNAP catalytic core consists of 2 alpha, 1 beta, 1 beta' and 1 omega subunit. When a sigma factor is associated with the core the holoenzyme is formed, which can initiate transcription.

It catalyses the reaction RNA(n) + a ribonucleoside 5'-triphosphate = RNA(n+1) + diphosphate. In terms of biological role, DNA-dependent RNA polymerase catalyzes the transcription of DNA into RNA using the four ribonucleoside triphosphates as substrates. The protein is DNA-directed RNA polymerase subunit alpha of Lacticaseibacillus casei (strain BL23) (Lactobacillus casei).